The chain runs to 219 residues: Redox-sensing transcriptional repressor Rex (219 aa).

A DNA-binding region (H-T-H motif) is located at residues 17–56 (LYYRIFKRFHRENIVKTSSKQIAEAIGIDPATVRRDFSYF). 91–96 (GVGNIG) lines the NAD(+) pocket.

It belongs to the transcriptional regulatory Rex family. As to quaternary structure, homodimer.

The protein resides in the cytoplasm. Modulates transcription in response to changes in cellular NADH/NAD(+) redox state. In Streptococcus thermophilus (strain ATCC BAA-491 / LMD-9), this protein is Redox-sensing transcriptional repressor Rex.